Here is a 327-residue protein sequence, read N- to C-terminus: tRNA dimethylallyltransferase (327 aa).

14–21 (GPTASGKT) lines the ATP pocket. 16–21 (TASGKT) is a substrate binding site. Interaction with substrate tRNA regions lie at residues 39 to 42 (DSAL) and 163 to 167 (QRIQR).

Belongs to the IPP transferase family. Monomer. Mg(2+) is required as a cofactor.

It carries out the reaction adenosine(37) in tRNA + dimethylallyl diphosphate = N(6)-dimethylallyladenosine(37) in tRNA + diphosphate. Catalyzes the transfer of a dimethylallyl group onto the adenine at position 37 in tRNAs that read codons beginning with uridine, leading to the formation of N6-(dimethylallyl)adenosine (i(6)A). This is tRNA dimethylallyltransferase from Xanthomonas oryzae pv. oryzae (strain KACC10331 / KXO85).